The chain runs to 386 residues: 5-hydroxytryptamine receptor 1B (386 aa).

At 1–42 (MEEQGIQCAPPPPAASQTGVPLTNLSHNCSADGYIYQDSIAL) the chain is on the extracellular side. N24 and N28 each carry an N-linked (GlcNAc...) asparagine glycan. A helical membrane pass occupies residues 43–68 (PWKVLLVALLALITLATTLSNAFVIA). Over 69–82 (TVYRTRKLHTPANY) the chain is Cytoplasmic. A helical membrane pass occupies residues 83-107 (LIASLAVTDLLVSILVMPISTMYTV). Residues 108-115 (TGRWTLGQ) lie on the Extracellular side of the membrane. The helical transmembrane segment at 116–141 (VVCDFWLSSDITCCTASIMHLCVIAL) threads the bilayer. C118 and C195 are joined by a disulfide. Ergotamine-binding residues include D125 and T130. The DRY motif; important for ligand-induced conformation changes and signaling signature appears at 142-144 (DRY). The Cytoplasmic segment spans residues 142–161 (DRYWAITDAVEYSAKRTPKR). The helical transmembrane segment at 162 to 180 (AAIMIVLVWVFSISISLPP) threads the bilayer. Residues 181 to 201 (FFWRQAKAEEEMLDCFVNTDH) are Extracellular-facing. Residue V197 coordinates ergotamine. A helical membrane pass occupies residues 202 to 225 (VLYTVYSTVGAFYLPTLLLIALYG). Over 226-311 (RIYVEARSRI…AARERKATKT (86 aa)) the chain is Cytoplasmic. The segment covering 255-268 (DSPGSTSSVTSINS) has biased composition (polar residues). The tract at residues 255-278 (DSPGSTSSVTSINSRAPDVPSESG) is disordered. The chain crosses the membrane as a helical span at residues 312 to 333 (LGIILGAFIVCWLPFFIISLVM). Topologically, residues 334 to 343 (PICKDACWFH) are extracellular. A helical transmembrane segment spans residues 344–366 (MAIFDFFNWLGYLNSLINPIIYT). The NPxxY motif; important for ligand-induced conformation changes and signaling signature appears at 361 to 365 (NPIIY). Residues 367 to 386 (MSNEDFKQAFHKLIRFKCAG) are Cytoplasmic-facing. C384 is lipidated: S-palmitoyl cysteine.

Belongs to the G-protein coupled receptor 1 family. As to quaternary structure, homodimer. Heterodimer with HTR1D. Phosphorylated. Desensitization of the receptor may be mediated by its phosphorylation. Post-translationally, palmitoylated. In terms of tissue distribution, predominantly expressed in striatum and Purkinje cells.

It localises to the cell membrane. Functionally, G-protein coupled receptor for 5-hydroxytryptamine (serotonin). Also functions as a receptor for ergot alkaloid derivatives, various anxiolytic and antidepressant drugs and other psychoactive substances, such as lysergic acid diethylamide (LSD). Ligand binding causes a conformation change that triggers signaling via guanine nucleotide-binding proteins (G proteins) and modulates the activity of downstream effectors, such as adenylate cyclase. HTR1B is coupled to G(i)/G(o) G alpha proteins and mediates inhibitory neurotransmission by inhibiting adenylate cyclase activity. Arrestin family members inhibit signaling via G proteins and mediate activation of alternative signaling pathways. Regulates the release of 5-hydroxytryptamine, dopamine and acetylcholine in the brain, and thereby affects neural activity, nociceptive processing, pain perception, mood and behavior. Besides, plays a role in vasoconstriction of cerebral arteries. This chain is 5-hydroxytryptamine receptor 1B (Htr1b), found in Mus musculus (Mouse).